Consider the following 317-residue polypeptide: COP9 signalosome complex subunit 6a (317 aa).

The 135-residue stretch at 30 to 164 (TQLNPPASIC…VTIYESELHV (135 aa)) folds into the MPN domain.

This sequence belongs to the peptidase M67A family. CSN6 subfamily. In terms of assembly, component of the CSN complex, probably composed of CSN1, CSN2, CSN3, CSN4, CSN5 (CSN5A or CSN5B), CSN6 (CSN6A or CSN6B), CSN7 and CSN8. Interacts with itself. In the complex, it probably interacts directly with CSN4 and CSN5A or CSN5B. Interacts with CSN7 (via C-terminal tail). Binds to the translation initiation factors TIF3E1.

The protein localises to the cytoplasm. It localises to the nucleus. Component of the COP9 signalosome complex (CSN), a complex involved in various cellular and developmental processes such as photomorphogenesis and auxin and jasmonate responses. The CSN complex is an essential regulator of the ubiquitin (Ubl) conjugation pathway by mediating the deneddylation of the cullin subunits of SCF-type E3 ligase complexes, leading to decrease the Ubl ligase activity of SCF. It is involved in repression of photomorphogenesis in darkness by regulating the activity of COP1-containing Ubl ligase complexes. The complex is also required for degradation of PSIAA6 by regulating the activity of the Ubl ligase SCF-TIR complex. Essential for the structural integrity of the CSN holocomplex. This Arabidopsis thaliana (Mouse-ear cress) protein is COP9 signalosome complex subunit 6a.